The following is an 89-amino-acid chain: Small ribosomal subunit protein uS15 (89 aa).

This sequence belongs to the universal ribosomal protein uS15 family. As to quaternary structure, part of the 30S ribosomal subunit. Forms a bridge to the 50S subunit in the 70S ribosome, contacting the 23S rRNA.

In terms of biological role, one of the primary rRNA binding proteins, it binds directly to 16S rRNA where it helps nucleate assembly of the platform of the 30S subunit by binding and bridging several RNA helices of the 16S rRNA. Forms an intersubunit bridge (bridge B4) with the 23S rRNA of the 50S subunit in the ribosome. In Bordetella avium (strain 197N), this protein is Small ribosomal subunit protein uS15.